The primary structure comprises 480 residues: UDP-N-acetylmuramoylalanine--D-glutamate ligase (480 aa).

110–116 contacts ATP; that stretch reads GTNGKST.

The protein belongs to the MurCDEF family.

The protein localises to the cytoplasm. The catalysed reaction is UDP-N-acetyl-alpha-D-muramoyl-L-alanine + D-glutamate + ATP = UDP-N-acetyl-alpha-D-muramoyl-L-alanyl-D-glutamate + ADP + phosphate + H(+). It functions in the pathway cell wall biogenesis; peptidoglycan biosynthesis. In terms of biological role, cell wall formation. Catalyzes the addition of glutamate to the nucleotide precursor UDP-N-acetylmuramoyl-L-alanine (UMA). The chain is UDP-N-acetylmuramoylalanine--D-glutamate ligase from Synechococcus sp. (strain JA-2-3B'a(2-13)) (Cyanobacteria bacterium Yellowstone B-Prime).